Consider the following 760-residue polypeptide: Cyclin-D-binding Myb-like transcription factor 1 (760 aa).

The interval Met-1 to Glu-237 is interaction with CCND2. The tract at residues Val-87–Arg-170 is required for transcriptional activation. Positions Val-87–Met-458 are required for DNA-binding. The tract at residues Gly-176–His-760 is interaction with CCND1, CCND2 and CCND3. In terms of domain architecture, Myb-like 1 spans Gly-225–Arg-263. In terms of domain architecture, HTH myb-type spans Lys-268–Gln-333. Positions Trp-306–Leu-329 form a DNA-binding region, H-T-H motif. The region spanning Trp-339–Lys-388 is the Myb-like 2 domain. Disordered stretches follow at residues Lys-414–Ser-435 and Ile-738–His-760. The required for transcriptional activation stretch occupies residues Ala-459–His-760.

It belongs to the DMTF1 family. As to quaternary structure, interacts with the D-type cyclins CCND1, CCND2 and CCND3. Interaction with D-type cyclins may modulate transcriptional activation by this protein. Phosphorylated by the cyclin-D2/CDK4, cyclin-D3/CDK4 and cyclin-D2/CDK6 complexes and to a lesser extent by the cyclin-D1/CDK4 complex. Expressed at relatively low levels in colonic mucosa, ovary, peripheral leukocytes, prostate and small intestine, and at higher levels in spleen, testis and thymus. Expressed in multiple regions of the brain and CNS including amygdala, caudate, corpus callosum, hippocampus, substantia nigra and subthalamic nucleus. Isoform 1 is the predominant isoform in monocytes, macrophages and neutrophils, isoform 2 is most strongly expressed in peripheral blood leukocytes and quiescent CD34 positive cells, and isoform 3 is expressed at low levels in all hematopoietic cell types. Expression is frequently reduced in non-small-cell lung carcinomas (NSCLC) due to hemizygous gene deletion, strongly suggesting that this locus is haploinsufficient for tumor suppression. Loss of this locus frequently occurs in tumors which retain wild-type CDKN2A/ARF and p53/TP53 loci. Hemizygous gene deletion has also been observed in leukemic blasts from patients with abnormalities of the long arm of chromosome 7.

The protein resides in the nucleus. Transcriptional activator which activates the CDKN2A/ARF locus in response to Ras-Raf signaling, thereby promoting p53/TP53-dependent growth arrest. Binds to the consensus sequence 5'-CCCG[GT]ATGT-3'. Isoform 1 may cooperate with MYB to activate transcription of the ANPEP gene. Isoform 2 may antagonize transcriptional activation by isoform 1. The polypeptide is Cyclin-D-binding Myb-like transcription factor 1 (DMTF1) (Homo sapiens (Human)).